The chain runs to 101 residues: Urease subunit beta (101 aa).

The protein belongs to the urease beta subunit family. As to quaternary structure, heterotrimer of UreA (gamma), UreB (beta) and UreC (alpha) subunits. Three heterotrimers associate to form the active enzyme.

The protein resides in the cytoplasm. It catalyses the reaction urea + 2 H2O + H(+) = hydrogencarbonate + 2 NH4(+). It participates in nitrogen metabolism; urea degradation; CO(2) and NH(3) from urea (urease route): step 1/1. This is Urease subunit beta from Bradyrhizobium diazoefficiens (strain JCM 10833 / BCRC 13528 / IAM 13628 / NBRC 14792 / USDA 110).